The chain runs to 470 residues: Ribulose bisphosphate carboxylase large chain (470 aa).

Substrate-binding residues include asparagine 118 and threonine 168. Lysine 170 functions as the Proton acceptor in the catalytic mechanism. Residue lysine 172 coordinates substrate. Residues lysine 196, aspartate 198, and glutamate 199 each contribute to the Mg(2+) site. Lysine 196 is subject to N6-carboxylysine. Catalysis depends on histidine 289, which acts as the Proton acceptor. Arginine 290, histidine 322, and serine 374 together coordinate substrate.

It belongs to the RuBisCO large chain family. Type I subfamily. Heterohexadecamer of 8 large chains and 8 small chains; disulfide-linked. The disulfide link is formed within the large subunit homodimers. RuBisCO interacts with the C-terminus of CcmM, and can be found in complexes that also include carbonic anhydrase (ccaA). RuBisCO associates with both the internal and shell portion of carboxysomes. Mg(2+) serves as cofactor. In terms of processing, the disulfide bond which can form in the large chain dimeric partners within the hexadecamer appears to be associated with oxidative stress and protein turnover.

Its subcellular location is the carboxysome. The enzyme catalyses 2 (2R)-3-phosphoglycerate + 2 H(+) = D-ribulose 1,5-bisphosphate + CO2 + H2O. It carries out the reaction D-ribulose 1,5-bisphosphate + O2 = 2-phosphoglycolate + (2R)-3-phosphoglycerate + 2 H(+). Its function is as follows. RuBisCO catalyzes two reactions: the carboxylation of D-ribulose 1,5-bisphosphate, the primary event in carbon dioxide fixation, as well as the oxidative fragmentation of the pentose substrate in the photorespiration process. Both reactions occur simultaneously and in competition at the same active site. This Synechocystis sp. (strain ATCC 27184 / PCC 6803 / Kazusa) protein is Ribulose bisphosphate carboxylase large chain.